A 272-amino-acid polypeptide reads, in one-letter code: Hydroxyethylthiazole kinase (272 aa).

Met-45 serves as a coordination point for substrate. Arg-121 and Thr-168 together coordinate ATP. Gly-195 contacts substrate.

It belongs to the Thz kinase family. As to quaternary structure, homotrimer. Mg(2+) serves as cofactor.

It catalyses the reaction 5-(2-hydroxyethyl)-4-methylthiazole + ATP = 4-methyl-5-(2-phosphooxyethyl)-thiazole + ADP + H(+). The protein operates within cofactor biosynthesis; thiamine diphosphate biosynthesis; 4-methyl-5-(2-phosphoethyl)-thiazole from 5-(2-hydroxyethyl)-4-methylthiazole: step 1/1. Functionally, catalyzes the phosphorylation of the hydroxyl group of 4-methyl-5-beta-hydroxyethylthiazole (THZ). The protein is Hydroxyethylthiazole kinase of Bacillus subtilis (strain 168).